A 270-amino-acid chain; its full sequence is uncharacterized protein (270 aa).

Positions 1–10 (MFGLKVKDAT) are enriched in basic and acidic residues. Disordered stretches follow at residues 1–115 (MFGL…PTPW) and 215–236 (QTGF…QGEQ). 2 stretches are compositionally biased toward low complexity: residues 26 to 41 (SSSS…TQRG) and 98 to 113 (GTSP…GTPT).

Belongs to the adhesin P1 family.

This is an uncharacterized protein from Mycoplasma pneumoniae (strain ATCC 29342 / M129 / Subtype 1) (Mycoplasmoides pneumoniae).